A 201-amino-acid chain; its full sequence is Recombination protein RecR (201 aa).

A C4-type zinc finger spans residues 59–74 (CEICGNMDTENMCRIC). A Toprim domain is found at 82-177 (SIIAIVETVA…KISRLASGIP (96 aa)).

The protein belongs to the RecR family.

Its function is as follows. May play a role in DNA repair. It seems to be involved in an RecBC-independent recombinational process of DNA repair. It may act with RecF and RecO. This Rickettsia conorii (strain ATCC VR-613 / Malish 7) protein is Recombination protein RecR.